A 322-amino-acid chain; its full sequence is Undecaprenyl-phosphate 4-deoxy-4-formamido-L-arabinose transferase (322 aa).

The Cytoplasmic portion of the chain corresponds to 1 to 235 (MFEIHPVKKV…TCLTTTPLRM (235 aa)). Residues 236 to 256 (LSLLGSIIAIGGFSIAVLLVI) form a helical membrane-spanning segment. Residues 257-269 (LRLTFGPQWAAEG) are Periplasmic-facing. Residues 270–290 (VFMLFAVLFTFIGAQFIGMGL) traverse the membrane as a helical segment. At 291–322 (LGEYIGRIYTDVRARPRYFVQQVIRPSSKENE) the chain is on the cytoplasmic side.

Belongs to the glycosyltransferase 2 family.

It is found in the cell inner membrane. It catalyses the reaction UDP-4-deoxy-4-formamido-beta-L-arabinose + di-trans,octa-cis-undecaprenyl phosphate = 4-deoxy-4-formamido-alpha-L-arabinopyranosyl di-trans,octa-cis-undecaprenyl phosphate + UDP. It participates in glycolipid biosynthesis; 4-amino-4-deoxy-alpha-L-arabinose undecaprenyl phosphate biosynthesis; 4-amino-4-deoxy-alpha-L-arabinose undecaprenyl phosphate from UDP-4-deoxy-4-formamido-beta-L-arabinose and undecaprenyl phosphate: step 1/2. It functions in the pathway bacterial outer membrane biogenesis; lipopolysaccharide biosynthesis. In terms of biological role, catalyzes the transfer of 4-deoxy-4-formamido-L-arabinose from UDP to undecaprenyl phosphate. The modified arabinose is attached to lipid A and is required for resistance to polymyxin and cationic antimicrobial peptides. The polypeptide is Undecaprenyl-phosphate 4-deoxy-4-formamido-L-arabinose transferase (Escherichia coli O139:H28 (strain E24377A / ETEC)).